Reading from the N-terminus, the 227-residue chain is Pyridoxal 5'-phosphate synthase subunit PdxT (227 aa).

52 to 54 is an L-glutamine binding site; it reads GES. Catalysis depends on C84, which acts as the Nucleophile. Residues R118 and 149 to 150 contribute to the L-glutamine site; that span reads IR. Catalysis depends on charge relay system residues H189 and E191.

The protein belongs to the glutaminase PdxT/SNO family. In the presence of PdxS, forms a dodecamer of heterodimers. Only shows activity in the heterodimer.

The enzyme catalyses aldehydo-D-ribose 5-phosphate + D-glyceraldehyde 3-phosphate + L-glutamine = pyridoxal 5'-phosphate + L-glutamate + phosphate + 3 H2O + H(+). The catalysed reaction is L-glutamine + H2O = L-glutamate + NH4(+). It functions in the pathway cofactor biosynthesis; pyridoxal 5'-phosphate biosynthesis. Its function is as follows. Catalyzes the hydrolysis of glutamine to glutamate and ammonia as part of the biosynthesis of pyridoxal 5'-phosphate. The resulting ammonia molecule is channeled to the active site of PdxS. This Renibacterium salmoninarum (strain ATCC 33209 / DSM 20767 / JCM 11484 / NBRC 15589 / NCIMB 2235) protein is Pyridoxal 5'-phosphate synthase subunit PdxT.